We begin with the raw amino-acid sequence, 616 residues long: Dihydroxy-acid dehydratase (616 aa).

Asp-81 contacts Mg(2+). Cys-122 serves as a coordination point for [2Fe-2S] cluster. Positions 123 and 124 each coordinate Mg(2+). Position 124 is an N6-carboxylysine (Lys-124). Residue Cys-195 coordinates [2Fe-2S] cluster. Glu-491 provides a ligand contact to Mg(2+). The Proton acceptor role is filled by Ser-517.

Belongs to the IlvD/Edd family. In terms of assembly, homodimer. The cofactor is [2Fe-2S] cluster. Requires Mg(2+) as cofactor.

It carries out the reaction (2R)-2,3-dihydroxy-3-methylbutanoate = 3-methyl-2-oxobutanoate + H2O. The catalysed reaction is (2R,3R)-2,3-dihydroxy-3-methylpentanoate = (S)-3-methyl-2-oxopentanoate + H2O. It participates in amino-acid biosynthesis; L-isoleucine biosynthesis; L-isoleucine from 2-oxobutanoate: step 3/4. The protein operates within amino-acid biosynthesis; L-valine biosynthesis; L-valine from pyruvate: step 3/4. Its function is as follows. Functions in the biosynthesis of branched-chain amino acids. Catalyzes the dehydration of (2R,3R)-2,3-dihydroxy-3-methylpentanoate (2,3-dihydroxy-3-methylvalerate) into 2-oxo-3-methylpentanoate (2-oxo-3-methylvalerate) and of (2R)-2,3-dihydroxy-3-methylbutanoate (2,3-dihydroxyisovalerate) into 2-oxo-3-methylbutanoate (2-oxoisovalerate), the penultimate precursor to L-isoleucine and L-valine, respectively. This chain is Dihydroxy-acid dehydratase, found in Tolumonas auensis (strain DSM 9187 / NBRC 110442 / TA 4).